Consider the following 122-residue polypeptide: Large ribosomal subunit protein uL14 (122 aa).

This sequence belongs to the universal ribosomal protein uL14 family. In terms of assembly, part of the 50S ribosomal subunit. Forms a cluster with proteins L3 and L19. In the 70S ribosome, L14 and L19 interact and together make contacts with the 16S rRNA in bridges B5 and B8.

In terms of biological role, binds to 23S rRNA. Forms part of two intersubunit bridges in the 70S ribosome. The polypeptide is Large ribosomal subunit protein uL14 (Chelativorans sp. (strain BNC1)).